Consider the following 352-residue polypeptide: Photosystem II D2 protein (352 aa).

The Cytoplasmic portion of the chain corresponds to Met-1–Gly-31. Residues Trp-32–Thr-53 traverse the membrane as a helical segment. Residues Phe-54–Gly-108 lie on the Lumenal, thylakoid side of the membrane. A helical membrane pass occupies residues Gly-109–Glu-131. His-117 lines the chlorophyll a pocket. Gln-129 provides a ligand contact to pheophytin a. The Cytoplasmic segment spans residues Ile-132–Pro-140. Residues Tyr-141 to Leu-162 traverse the membrane as a helical segment. Position 142 (Asn-142) interacts with pheophytin a. Residues Gly-163–Asn-190 lie on the Lumenal, thylakoid side of the membrane. Residues Trp-191–Thr-217 traverse the membrane as a helical segment. His-197 contacts chlorophyll a. 2 residues coordinate a plastoquinone: His-214 and Phe-261. His-214 contributes to the Fe cation binding site. At Val-218 to Arg-265 the chain is on the cytoplasmic side. Residues Trp-266–Gly-288 traverse the membrane as a helical segment. His-268 contributes to the Fe cation binding site. The Lumenal, thylakoid segment spans residues Leu-289–Leu-352.

It belongs to the reaction center PufL/M/PsbA/D family. As to quaternary structure, PSII is composed of 1 copy each of membrane proteins PsbA, PsbB, PsbC, PsbD, PsbE, PsbF, PsbH, PsbI, PsbJ, PsbK, PsbL, PsbM, PsbT, PsbX, PsbY, PsbZ, Psb30/Ycf12, peripheral proteins PsbO, CyanoQ (PsbQ), PsbU, PsbV and a large number of cofactors. It forms dimeric complexes. It depends on The D1/D2 heterodimer binds P680, chlorophylls that are the primary electron donor of PSII, and subsequent electron acceptors. It shares a non-heme iron and each subunit binds pheophytin, quinone, additional chlorophylls, carotenoids and lipids. There is also a Cl(-1) ion associated with D1 and D2, which is required for oxygen evolution. The PSII complex binds additional chlorophylls, carotenoids and specific lipids. as a cofactor.

It is found in the cellular thylakoid membrane. It carries out the reaction 2 a plastoquinone + 4 hnu + 2 H2O = 2 a plastoquinol + O2. In terms of biological role, photosystem II (PSII) is a light-driven water:plastoquinone oxidoreductase that uses light energy to abstract electrons from H(2)O, generating O(2) and a proton gradient subsequently used for ATP formation. It consists of a core antenna complex that captures photons, and an electron transfer chain that converts photonic excitation into a charge separation. The D1/D2 (PsbA/PsbD) reaction center heterodimer binds P680, the primary electron donor of PSII as well as several subsequent electron acceptors. D2 is needed for assembly of a stable PSII complex. The polypeptide is Photosystem II D2 protein (Synechocystis sp. (strain ATCC 27184 / PCC 6803 / Kazusa)).